The chain runs to 89 residues: Small ribosomal subunit protein uS17 (89 aa).

Belongs to the universal ribosomal protein uS17 family. As to quaternary structure, part of the 30S ribosomal subunit.

In terms of biological role, one of the primary rRNA binding proteins, it binds specifically to the 5'-end of 16S ribosomal RNA. This Polaromonas sp. (strain JS666 / ATCC BAA-500) protein is Small ribosomal subunit protein uS17.